Reading from the N-terminus, the 496-residue chain is Pre-glycoprotein polyprotein GP complex (496 aa).

The N-myristoyl glycine; by host moiety is linked to residue glycine 2. Topologically, residues 2–17 (GQLISFFQEIPVFLQE) are extracellular. Residues 18–32 (ALNIALVAVSLIAVI) traverse the membrane as a helical segment. Position 33 (lysine 33) is a topological domain, cytoplasmic. A helical transmembrane segment spans residues 34 to 53 (GIINLYKSGLFQFIFFLLLA). Extracellular loops occupy residues 54–58 (GRSCS) and 59–435 (DGTF…TLVD). A Zn(2+)-binding site is contributed by cysteine 57. N-linked (GlcNAc...) asparagine; by host glycans are attached at residues asparagine 83, asparagine 95, asparagine 137, asparagine 166, and asparagine 178. 6 disulfides stabilise this stretch: cysteine 92–cysteine 237, cysteine 135–cysteine 164, cysteine 207–cysteine 213, cysteine 282–cysteine 295, cysteine 304–cysteine 313, and cysteine 367–cysteine 388. Asparagine 368, asparagine 376, asparagine 393, and asparagine 398 each carry an N-linked (GlcNAc...) asparagine; by host glycan. A helical transmembrane segment spans residues 436-456 (ICFWSTVFFTASLFLHLVGIP). Over 457 to 496 (THRHLKGEACPLPHKLDSFGGCRCGKYPRLRKPTIWHKRH) the chain is Cytoplasmic. Residues histidine 458, histidine 460, cysteine 466, histidine 470, cysteine 478, cysteine 480, and histidine 496 each coordinate Zn(2+).

Belongs to the arenaviridae GPC protein family. As to quaternary structure, homotetramer; disulfide-linked. Interacts with host TFRC. In terms of assembly, homotetramer. GP2 homotetramers bind through ionic interactions with GP1 homotetramers to form the GP complex together with the stable signal peptide. The GP-C polyprotein interacts with the host protease MBTPS1/SKI-1 resulting in the polyprotein processing. Post-translationally, specific enzymatic cleavages in vivo yield mature proteins. GP-C polyprotein is cleaved in the endoplasmic reticulum by the host protease MBTPS1. Only cleaved glycoprotein is incorporated into virions. The SSP remains stably associated with the GP complex following cleavage by signal peptidase and plays crucial roles in the trafficking of GP through the secretory pathway. In terms of processing, myristoylation is necessary for GP2-mediated fusion activity.

It localises to the virion membrane. The protein localises to the host endoplasmic reticulum membrane. It is found in the host Golgi apparatus membrane. The protein resides in the host cell membrane. Its function is as follows. Class I viral fusion protein that directs fusion of viral and host endosomal membranes, leading to delivery of the nucleocapsid into the cytoplasm. Membrane fusion is mediated by irreversible conformational changes induced upon acidification in the endosome. Stable signal peptide (SSP): cleaved and functions as a signal peptide. In addition, it is also retained as the third component of the GP complex. The SSP is required for efficient glycoprotein expression, post-translational maturation cleavage of GP1 and GP2, glycoprotein transport to the cell surface plasma membrane, formation of infectious virus particles, and acid pH-dependent glycoprotein-mediated cell fusion. In terms of biological role, interacts with the host receptor. Mediates virus attachment to host TFRC. This attachment induces virion internalization predominantly through clathrin-mediated endocytosis. The sequence is that of Pre-glycoprotein polyprotein GP complex from Machupo virus (MACV).